A 95-amino-acid chain; its full sequence is Co-chaperonin GroES (95 aa).

Belongs to the GroES chaperonin family. Heptamer of 7 subunits arranged in a ring. Interacts with the chaperonin GroEL.

It is found in the cytoplasm. Its function is as follows. Together with the chaperonin GroEL, plays an essential role in assisting protein folding. The GroEL-GroES system forms a nano-cage that allows encapsulation of the non-native substrate proteins and provides a physical environment optimized to promote and accelerate protein folding. GroES binds to the apical surface of the GroEL ring, thereby capping the opening of the GroEL channel. The chain is Co-chaperonin GroES from Chlorobaculum parvum (strain DSM 263 / NCIMB 8327) (Chlorobium vibrioforme subsp. thiosulfatophilum).